Consider the following 690-residue polypeptide: Protein AC23 (690 aa).

Positions 1–37 (MLACKFSQYQAFIMDGVKLLGTCALIILLSTTSTVVG) are cleaved as a signal peptide.

Its subcellular location is the virion. Its function is as follows. Pathogenicity factor that accelerates mortality in the host insect. In Autographa californica nuclear polyhedrosis virus (AcMNPV), this protein is Protein AC23.